Reading from the N-terminus, the 363-residue chain is Cytochrome P450 CYP82D47 (363 aa).

Cys342 serves as a coordination point for heme.

Belongs to the cytochrome P450 family. Heme serves as cofactor.

Probable heme-thiolate monooxygenase. In Panax ginseng (Korean ginseng), this protein is Cytochrome P450 CYP82D47.